Consider the following 281-residue polypeptide: Transcription factor lfc1 (281 aa).

A DNA-binding region (zn(2)-C6 fungal-type) is located at residues 60-87 (CLTCRMKKIKCDETKPTCARCTHGQREC).

The protein resides in the nucleus. Transcription factor that acts as a negative regulator of basidioma development via repressing the expression of genes involved in basidioma development, including hydrophobins such as Hyd-1 and Hyd-8, lectins such as JRL1, as well as the fruiting body differentiation gene FVFD16. This Flammulina velutipes (Agaricus velutipes) protein is Transcription factor lfc1.